A 139-amino-acid chain; its full sequence is Peptide methionine sulfoxide reductase B5 (139 aa).

Ala-2 is subject to N-acetylalanine. A MsrB domain is found at 12–133; it reads EEEWRAVLSP…NSVSISFNPA (122 aa). The Zn(2+) site is built by Cys-51, Cys-54, Cys-97, and Cys-100. Cys-69 and Cys-122 are joined by a disulfide. Cys-122 acts as the Nucleophile in catalysis.

Belongs to the MsrB Met sulfoxide reductase family. Zn(2+) is required as a cofactor.

Its subcellular location is the cytoplasm. It localises to the cytosol. The catalysed reaction is L-methionyl-[protein] + [thioredoxin]-disulfide + H2O = L-methionyl-(R)-S-oxide-[protein] + [thioredoxin]-dithiol. Functionally, catalyzes the reduction of methionine sulfoxide (MetSO) to methionine in proteins. Plays a protective role against oxidative stress by restoring activity to proteins that have been inactivated by methionine oxidation. MSRB family specifically reduces the MetSO R-enantiomer. The polypeptide is Peptide methionine sulfoxide reductase B5 (MSRB5) (Arabidopsis thaliana (Mouse-ear cress)).